Here is a 235-residue protein sequence, read N- to C-terminus: Carboxy-S-adenosyl-L-methionine synthase (235 aa).

S-adenosyl-L-methionine is bound by residues Y35, 60 to 62, 84 to 85, 110 to 111, N125, and R192; these read GCS, DN, and DI.

This sequence belongs to the class I-like SAM-binding methyltransferase superfamily. Cx-SAM synthase family. In terms of assembly, homodimer.

It carries out the reaction prephenate + S-adenosyl-L-methionine = carboxy-S-adenosyl-L-methionine + 3-phenylpyruvate + H2O. Catalyzes the conversion of S-adenosyl-L-methionine (SAM) to carboxy-S-adenosyl-L-methionine (Cx-SAM). In Sulfurimonas denitrificans (strain ATCC 33889 / DSM 1251) (Thiomicrospira denitrificans (strain ATCC 33889 / DSM 1251)), this protein is Carboxy-S-adenosyl-L-methionine synthase.